Reading from the N-terminus, the 462-residue chain is 3-isopropylmalate dehydratase large subunit (462 aa).

The [4Fe-4S] cluster site is built by Cys-337, Cys-397, and Cys-400.

This sequence belongs to the aconitase/IPM isomerase family. LeuC type 1 subfamily. In terms of assembly, heterodimer of LeuC and LeuD. [4Fe-4S] cluster serves as cofactor.

The catalysed reaction is (2R,3S)-3-isopropylmalate = (2S)-2-isopropylmalate. It participates in amino-acid biosynthesis; L-leucine biosynthesis; L-leucine from 3-methyl-2-oxobutanoate: step 2/4. Catalyzes the isomerization between 2-isopropylmalate and 3-isopropylmalate, via the formation of 2-isopropylmaleate. This Listeria innocua serovar 6a (strain ATCC BAA-680 / CLIP 11262) protein is 3-isopropylmalate dehydratase large subunit.